The primary structure comprises 299 residues: Probable lipid kinase YegS (299 aa).

The region spanning alanine 2–threonine 133 is the DAGKc domain. ATP contacts are provided by residues threonine 40, glycine 66–glutamate 72, and threonine 95. Mg(2+) is bound by residues leucine 215, aspartate 218, and leucine 220. The active-site Proton acceptor is glutamate 271.

It belongs to the diacylglycerol/lipid kinase family. YegS lipid kinase subfamily. Mg(2+) is required as a cofactor. Ca(2+) serves as cofactor.

Its subcellular location is the cytoplasm. Functionally, probably phosphorylates lipids; the in vivo substrate is unknown. The chain is Probable lipid kinase YegS from Salmonella heidelberg (strain SL476).